The sequence spans 432 residues: D-amino acid dehydrogenase (432 aa).

3–17 serves as a coordination point for FAD; it reads VLVLGGGVIGVTSAY.

This sequence belongs to the DadA oxidoreductase family. Requires FAD as cofactor.

The enzyme catalyses a D-alpha-amino acid + A + H2O = a 2-oxocarboxylate + AH2 + NH4(+). It functions in the pathway amino-acid degradation; D-alanine degradation; NH(3) and pyruvate from D-alanine: step 1/1. In terms of biological role, oxidative deamination of D-amino acids. The polypeptide is D-amino acid dehydrogenase (Delftia acidovorans (strain DSM 14801 / SPH-1)).